Reading from the N-terminus, the 513-residue chain is MAGGSFGPTGVAKERAEQYQGKVTSYVIIACLVAAIGGSIFGYDIGISGGVTSMDEFLEEFFHTVYEKKKQAHESNYCKYDNQGLAAFTSSLYLAGLVSTLVASPITRNYGRRASIVCGGISFLIGSGLNAGAVNLAMLLAGRIMLGVGIGFGNQAVPLYLSEVAPTHLRGGLNMMFQLATTIGIFTANMVNYGTQQLKPWGWRLSLGLAAFPALLMTLGGYFLPETPNSLVERGLTERGRRVLVKLRGTENVNAELQDMVDASELANSIKHPFRNILQKRHRPQLVMAICMPMFQILTGINSILFYAPVLFQTMGFGGNASLYSSALTGAVLVLSTFISIGLVDRLGRRALLITGGIQMIICQVIVAVILGVKFGDNQELSKGYSVIVVIFICLFVVAFGWSWGPLGWTIPSEIFPLETRSAGQSITVAVNLLFTFIIAQAFLGLLCAFKFGIFLFFAGWVTVMTIFVYFLLPETKGVPIEEMTLLWSKHWFWKKVLPDATNLEDESKNVSV.

Residues Met1 to Tyr26 lie on the Cytoplasmic side of the membrane. A run of 12 helical transmembrane segments spans residues Val27–Ile47, Gly84–Ser104, Ile121–Ala141, Ile144–Val164, Gly171–Val191, Leu205–Pro225, Leu286–Phe306, Tyr324–Val344, Ala351–Leu371, Val387–Leu407, Ile427–Leu447, and Phe452–Leu472. Over Leu473–Val513 the chain is Cytoplasmic.

This sequence belongs to the major facilitator superfamily. Sugar transporter (TC 2.A.1.1) family.

Its subcellular location is the cell membrane. Functionally, mediates an active uptake of hexoses, probably by sugar/hydrogen symport. The chain is Sugar transport protein 7 (STP7) from Arabidopsis thaliana (Mouse-ear cress).